We begin with the raw amino-acid sequence, 192 residues long: UPF0462 protein C4orf33 homolog (192 aa).

This sequence belongs to the UPF0462 family.

This is UPF0462 protein C4orf33 homolog (D3Ertd751e) from Mus musculus (Mouse).